Reading from the N-terminus, the 124-residue chain is U-scoloptoxin-Er5d (124 aa).

Positions 1–22 (MKTNCEFPLLCLLIVLVANVEG) are cleaved as a signal peptide. Positions 23 to 94 (EVEDNELKMV…KRLWRNWERR (72 aa)) are excised as a propeptide. RLWRNWE repeat units lie at residues 34–40 (RLWRNWE), 61–67 (RLWRNWE), and 86–92 (RLWRNWE). Gln95 is subject to Pyrrolidone carboxylic acid. One copy of the RLWRNWE 4; approximate repeat lies at 107–113 (ELWRNWE). A propeptide spanning residues 112-124 (WEDLKRRQVGRFE) is cleaved from the precursor.

Belongs to the scoloptoxin-08 family. Expressed by the venom gland.

The protein resides in the secreted. In Ethmostigmus rubripes (Giant centipede), this protein is U-scoloptoxin-Er5d.